The sequence spans 186 residues: Translation initiation factor IF-3 (186 aa).

The segment at 1–20 (MINRNSGKDRDRSRSGDKEL) is disordered.

The protein belongs to the IF-3 family. As to quaternary structure, monomer.

The protein localises to the cytoplasm. In terms of biological role, IF-3 binds to the 30S ribosomal subunit and shifts the equilibrium between 70S ribosomes and their 50S and 30S subunits in favor of the free subunits, thus enhancing the availability of 30S subunits on which protein synthesis initiation begins. This chain is Translation initiation factor IF-3, found in Borrelia duttonii (strain Ly).